Consider the following 519-residue polypeptide: ATP synthase subunit beta (519 aa).

Residues 1-26 (MAKAATPKRAPARAAAIPAAATPAAK) show a composition bias toward low complexity. The disordered stretch occupies residues 1-40 (MAKAATPKRAPARAAAIPAAATPAAKPAKRASTRSAAARS). 197–204 (GGAGVGKT) contacts ATP.

It belongs to the ATPase alpha/beta chains family. In terms of assembly, F-type ATPases have 2 components, CF(1) - the catalytic core - and CF(0) - the membrane proton channel. CF(1) has five subunits: alpha(3), beta(3), gamma(1), delta(1), epsilon(1). CF(0) has three main subunits: a(1), b(2) and c(9-12). The alpha and beta chains form an alternating ring which encloses part of the gamma chain. CF(1) is attached to CF(0) by a central stalk formed by the gamma and epsilon chains, while a peripheral stalk is formed by the delta and b chains.

It is found in the cell inner membrane. The catalysed reaction is ATP + H2O + 4 H(+)(in) = ADP + phosphate + 5 H(+)(out). Produces ATP from ADP in the presence of a proton gradient across the membrane. The catalytic sites are hosted primarily by the beta subunits. In Chelativorans sp. (strain BNC1), this protein is ATP synthase subunit beta.